A 150-amino-acid polypeptide reads, in one-letter code: MKCPFCGNSDSKVVDSRPDKGGSGIRRRRECEQCAKRFTTHERIEEMLPLVLKKDGRREPFERTKIISGIKKACEKRPISVEVIERLVDRLETRLQESSEKEISTTLIGEWIMKELHDLDEVAYVRFASVYRSFRDINEFMQELQELLKK.

Positions 1–26 (MKCPFCGNSDSKVVDSRPDKGGSGIR) are disordered. The segment at 3 to 34 (CPFCGNSDSKVVDSRPDKGGSGIRRRRECEQC) is a zinc-finger region. The 91-residue stretch at 49-139 (PLVLKKDGRR…VYRSFRDINE (91 aa)) folds into the ATP-cone domain.

The protein belongs to the NrdR family. Zn(2+) serves as cofactor.

Functionally, negatively regulates transcription of bacterial ribonucleotide reductase nrd genes and operons by binding to NrdR-boxes. The protein is Transcriptional repressor NrdR of Pelobacter propionicus (strain DSM 2379 / NBRC 103807 / OttBd1).